We begin with the raw amino-acid sequence, 334 residues long: o-succinylbenzoate synthase (334 aa).

The active-site Proton donor is lysine 107. Mg(2+) contacts are provided by aspartate 135, glutamate 162, and aspartate 185. Catalysis depends on lysine 209, which acts as the Proton acceptor.

This sequence belongs to the mandelate racemase/muconate lactonizing enzyme family. MenC type 1 subfamily. Requires a divalent metal cation as cofactor.

It catalyses the reaction (1R,6R)-6-hydroxy-2-succinyl-cyclohexa-2,4-diene-1-carboxylate = 2-succinylbenzoate + H2O. Its pathway is quinol/quinone metabolism; 1,4-dihydroxy-2-naphthoate biosynthesis; 1,4-dihydroxy-2-naphthoate from chorismate: step 4/7. The protein operates within quinol/quinone metabolism; menaquinone biosynthesis. Converts 2-succinyl-6-hydroxy-2,4-cyclohexadiene-1-carboxylate (SHCHC) to 2-succinylbenzoate (OSB). This chain is o-succinylbenzoate synthase, found in Mycobacterium leprae (strain TN).